The following is a 633-amino-acid chain: ABC transporter G family member 1 (633 aa).

In terms of domain architecture, ABC transporter spans 23–265; that stretch reads LTWEDLWVTA…FALSGFPCPT (243 aa). Residue 60-67 coordinates ATP; sequence GPSGSGKS. One can recognise an ABC transmembrane type-2 domain in the interval 340 to 552; sequence TQSLVLTRRS…AYEGMFKNEF (213 aa). N-linked (GlcNAc...) asparagine glycosylation is present at Asn352. Helical transmembrane passes span 364–384, 394–414, 440–460, 470–490, 498–518, and 580–600; these read LAVY…VGFS, MLMF…PSFV, LSAM…AYFM, FIYF…LMMI, FLMG…SGGF, and IDLV…LLVV.

It belongs to the ABC transporter superfamily. ABCG family. In terms of assembly, homodimer. As to expression, restricted to the petals, with the highest expression in the limb and, to a lesser extent, in petal tubes, probably in both epidermal and mesophyll cell layers.

The protein resides in the cell membrane. Its function is as follows. ABC transporter controlling the release of volatile organic compounds (VOCs), including floral volatile benzenoids and phenylpropanoids (FVBP), in flowers of fragrant cultivars (e.g. cv. Mitchell and cv. V26). This scent, mostly produced in the evening and night by the petals, attracts the pollinators (e.g. the night-active hawkmoth pollinator Manduca sexta). The sequence is that of ABC transporter G family member 1 from Petunia hybrida (Petunia).